A 765-amino-acid polypeptide reads, in one-letter code: Phosphoribosylformylglycinamidine synthase subunit PurL (765 aa).

His57 is an active-site residue. Tyr60 and Arg104 together coordinate ATP. Residue Glu106 participates in Mg(2+) binding. Substrate-binding positions include 107 to 110 (SHNH) and Arg129. His108 acts as the Proton acceptor in catalysis. Asp130 is a binding site for Mg(2+). Gln254 provides a ligand contact to substrate. Asp282 lines the Mg(2+) pocket. Residue 326–328 (ESQ) participates in substrate binding. Asn508 and Gly545 together coordinate ATP. Asn546 serves as a coordination point for Mg(2+). Ser548 contacts substrate.

This sequence belongs to the FGAMS family. Monomer. Part of the FGAM synthase complex composed of 1 PurL, 1 PurQ and 2 PurS subunits.

The protein localises to the cytoplasm. The enzyme catalyses N(2)-formyl-N(1)-(5-phospho-beta-D-ribosyl)glycinamide + L-glutamine + ATP + H2O = 2-formamido-N(1)-(5-O-phospho-beta-D-ribosyl)acetamidine + L-glutamate + ADP + phosphate + H(+). It functions in the pathway purine metabolism; IMP biosynthesis via de novo pathway; 5-amino-1-(5-phospho-D-ribosyl)imidazole from N(2)-formyl-N(1)-(5-phospho-D-ribosyl)glycinamide: step 1/2. In terms of biological role, part of the phosphoribosylformylglycinamidine synthase complex involved in the purines biosynthetic pathway. Catalyzes the ATP-dependent conversion of formylglycinamide ribonucleotide (FGAR) and glutamine to yield formylglycinamidine ribonucleotide (FGAM) and glutamate. The FGAM synthase complex is composed of three subunits. PurQ produces an ammonia molecule by converting glutamine to glutamate. PurL transfers the ammonia molecule to FGAR to form FGAM in an ATP-dependent manner. PurS interacts with PurQ and PurL and is thought to assist in the transfer of the ammonia molecule from PurQ to PurL. The polypeptide is Phosphoribosylformylglycinamidine synthase subunit PurL (Corynebacterium aurimucosum (strain ATCC 700975 / DSM 44827 / CIP 107346 / CN-1) (Corynebacterium nigricans)).